The following is a 264-amino-acid chain: Acyl-[acyl-carrier-protein]--UDP-N-acetylglucosamine O-acyltransferase (264 aa).

The protein belongs to the transferase hexapeptide repeat family. LpxA subfamily. As to quaternary structure, homotrimer.

The protein localises to the cytoplasm. The enzyme catalyses a (3R)-hydroxyacyl-[ACP] + UDP-N-acetyl-alpha-D-glucosamine = a UDP-3-O-[(3R)-3-hydroxyacyl]-N-acetyl-alpha-D-glucosamine + holo-[ACP]. It participates in glycolipid biosynthesis; lipid IV(A) biosynthesis; lipid IV(A) from (3R)-3-hydroxytetradecanoyl-[acyl-carrier-protein] and UDP-N-acetyl-alpha-D-glucosamine: step 1/6. Involved in the biosynthesis of lipid A, a phosphorylated glycolipid that anchors the lipopolysaccharide to the outer membrane of the cell. In Rickettsia typhi (strain ATCC VR-144 / Wilmington), this protein is Acyl-[acyl-carrier-protein]--UDP-N-acetylglucosamine O-acyltransferase.